The sequence spans 197 residues: Imidazoleglycerol-phosphate dehydratase (197 aa).

The protein belongs to the imidazoleglycerol-phosphate dehydratase family.

Its subcellular location is the cytoplasm. The catalysed reaction is D-erythro-1-(imidazol-4-yl)glycerol 3-phosphate = 3-(imidazol-4-yl)-2-oxopropyl phosphate + H2O. Its pathway is amino-acid biosynthesis; L-histidine biosynthesis; L-histidine from 5-phospho-alpha-D-ribose 1-diphosphate: step 6/9. This is Imidazoleglycerol-phosphate dehydratase from Azorhizobium caulinodans (strain ATCC 43989 / DSM 5975 / JCM 20966 / LMG 6465 / NBRC 14845 / NCIMB 13405 / ORS 571).